Reading from the N-terminus, the 394-residue chain is Formate-dependent phosphoribosylglycinamide formyltransferase (394 aa).

N(1)-(5-phospho-beta-D-ribosyl)glycinamide contacts are provided by residues 22-23 and glutamate 82; that span reads EL. ATP contacts are provided by residues arginine 114, lysine 155, 160 to 165, 195 to 198, and glutamate 203; these read SSGKGQ and EGFV. Residues 119–308 enclose the ATP-grasp domain; sequence RLAAETLKLP…EFALHVRAIL (190 aa). The Mg(2+) site is built by glutamate 267 and glutamate 279. N(1)-(5-phospho-beta-D-ribosyl)glycinamide is bound by residues aspartate 286, lysine 357, and 364–365; that span reads RR.

The protein belongs to the PurK/PurT family. As to quaternary structure, homodimer.

The catalysed reaction is N(1)-(5-phospho-beta-D-ribosyl)glycinamide + formate + ATP = N(2)-formyl-N(1)-(5-phospho-beta-D-ribosyl)glycinamide + ADP + phosphate + H(+). It participates in purine metabolism; IMP biosynthesis via de novo pathway; N(2)-formyl-N(1)-(5-phospho-D-ribosyl)glycinamide from N(1)-(5-phospho-D-ribosyl)glycinamide (formate route): step 1/1. Its function is as follows. Involved in the de novo purine biosynthesis. Catalyzes the transfer of formate to 5-phospho-ribosyl-glycinamide (GAR), producing 5-phospho-ribosyl-N-formylglycinamide (FGAR). Formate is provided by PurU via hydrolysis of 10-formyl-tetrahydrofolate. This is Formate-dependent phosphoribosylglycinamide formyltransferase from Tolumonas auensis (strain DSM 9187 / NBRC 110442 / TA 4).